Here is a 242-residue protein sequence, read N- to C-terminus: Pyridoxine 5'-phosphate synthase (242 aa).

Asn7 contributes to the 3-amino-2-oxopropyl phosphate binding site. 9–10 (DH) contacts 1-deoxy-D-xylulose 5-phosphate. Residue Arg18 participates in 3-amino-2-oxopropyl phosphate binding. Residue His43 is the Proton acceptor of the active site. Residues Arg45 and His50 each contribute to the 1-deoxy-D-xylulose 5-phosphate site. Glu70 (proton acceptor) is an active-site residue. Thr100 is a binding site for 1-deoxy-D-xylulose 5-phosphate. His190 functions as the Proton donor in the catalytic mechanism. 3-amino-2-oxopropyl phosphate-binding positions include Gly191 and 212–213 (GH).

Belongs to the PNP synthase family. As to quaternary structure, homooctamer; tetramer of dimers.

It localises to the cytoplasm. It catalyses the reaction 3-amino-2-oxopropyl phosphate + 1-deoxy-D-xylulose 5-phosphate = pyridoxine 5'-phosphate + phosphate + 2 H2O + H(+). Its pathway is cofactor biosynthesis; pyridoxine 5'-phosphate biosynthesis; pyridoxine 5'-phosphate from D-erythrose 4-phosphate: step 5/5. Functionally, catalyzes the complicated ring closure reaction between the two acyclic compounds 1-deoxy-D-xylulose-5-phosphate (DXP) and 3-amino-2-oxopropyl phosphate (1-amino-acetone-3-phosphate or AAP) to form pyridoxine 5'-phosphate (PNP) and inorganic phosphate. The polypeptide is Pyridoxine 5'-phosphate synthase (Thermodesulfovibrio yellowstonii (strain ATCC 51303 / DSM 11347 / YP87)).